A 360-amino-acid polypeptide reads, in one-letter code: Archaemetzincin-2 (360 aa).

His254 is a Zn(2+) binding site. Residue Glu255 is the Proton acceptor of the active site. Residues His258, His264, Cys265, Cys270, Cys289, and Cys292 each contribute to the Zn(2+) site.

It belongs to the peptidase M54 family. Requires Zn(2+) as cofactor. In terms of tissue distribution, down-regulated in testis from patients with maturation arrest (MA) or Sertoli cell-only syndrome (SCOS).

In terms of biological role, probable zinc metalloprotease. This chain is Archaemetzincin-2 (AMZ2), found in Homo sapiens (Human).